A 194-amino-acid polypeptide reads, in one-letter code: AEVAPAPAAAAPAKAPKKKAAAKPKKSGPAVGELAGKAVAASKERSGVSLAALKKSLAAGGYDVEKNNSRVKIAVKSLVTKGTLVETKGTGASGSFKLNKKAVEAKKPAKKAAAPKAKKVAAKKPAAAKKPKKVAAKKAVAAKKSPKKAKKPATPKKAAKSPKKATKAAKPKAAKPKKAAKSPKKVKKPAAAKK.

At Ala-1 the chain carries N-acetylalanine; partial. Over residues 1–14 the composition is skewed to low complexity; that stretch reads AEVAPAPAAAAPAK. Disordered regions lie at residues 1-31 and 105-194; these read AEVA…GPAV and AKKP…AAKK. Basic residues predominate over residues 15–26; that stretch reads APKKKAAAKPKK. In terms of domain architecture, H15 spans 27–100; the sequence is SGPAVGELAG…GASGSFKLNK (74 aa). Residues 116 to 194 are compositionally biased toward basic residues; it reads KAKKVAAKKP…KVKKPAAAKK (79 aa). Ser-145, Ser-161, and Ser-182 each carry phosphoserine.

Belongs to the histone H1/H5 family.

Its subcellular location is the nucleus. The protein localises to the chromosome. In terms of biological role, histones H1 are necessary for the condensation of nucleosome chains into higher-order structures. The protein is Histone H1 of Salmo trutta (Brown trout).